A 360-amino-acid chain; its full sequence is Phospho-N-acetylmuramoyl-pentapeptide-transferase (360 aa).

The next 10 membrane-spanning stretches (helical) occupy residues 25-45, 73-93, 97-117, 132-152, 168-188, 199-219, 236-256, 263-283, 288-308, and 338-358; these read RGIL…PWMI, TMGG…WADL, YVWV…VDDY, WKYF…YMTA, VSIP…VGSS, GLAI…CYLS, AGEL…FLWF, VFMG…IAVI, IVLF…VIQV, and VIVR…ATLK.

The protein belongs to the glycosyltransferase 4 family. MraY subfamily. Mg(2+) serves as cofactor.

It localises to the cell inner membrane. It catalyses the reaction UDP-N-acetyl-alpha-D-muramoyl-L-alanyl-gamma-D-glutamyl-meso-2,6-diaminopimeloyl-D-alanyl-D-alanine + di-trans,octa-cis-undecaprenyl phosphate = di-trans,octa-cis-undecaprenyl diphospho-N-acetyl-alpha-D-muramoyl-L-alanyl-D-glutamyl-meso-2,6-diaminopimeloyl-D-alanyl-D-alanine + UMP. The protein operates within cell wall biogenesis; peptidoglycan biosynthesis. Its function is as follows. Catalyzes the initial step of the lipid cycle reactions in the biosynthesis of the cell wall peptidoglycan: transfers peptidoglycan precursor phospho-MurNAc-pentapeptide from UDP-MurNAc-pentapeptide onto the lipid carrier undecaprenyl phosphate, yielding undecaprenyl-pyrophosphoryl-MurNAc-pentapeptide, known as lipid I. The chain is Phospho-N-acetylmuramoyl-pentapeptide-transferase from Pseudomonas fluorescens (strain ATCC BAA-477 / NRRL B-23932 / Pf-5).